We begin with the raw amino-acid sequence, 473 residues long: DNA-binding protein (473 aa).

Disordered regions lie at residues 1–69 (MAGR…GFSH) and 85–111 (RRLEPKGVPPPSEENNEEEEPSTSKAV). The span at 7–18 (ELPTITPYLQET) shows a compositional bias: polar residues. Residues 53-62 (PDSEEEEEEV) show a composition bias toward acidic residues. Tyrosine 141 carries the phosphotyrosine; by host modification. Zn(2+)-binding residues include cysteine 230 and histidine 232. Positions 243-277 (VEMDVASENAQRALKEHPSRAKVVQNRWGRSVVQL) are flexible loop. Zn(2+) contacts are provided by cysteine 285, cysteine 301, cysteine 342, cysteine 344, cysteine 396, and cysteine 412. The interval 459–473 (VALPASHGDGEKEPF) is C-terminal arm, DBP binding.

This sequence belongs to the adenoviridae E2A DNA-binding protein family. Homomultimerizes on viral ssDNA bound to pTP. Forms a initiation complex with viral polymerase, pTP and hosts NFIA and POU2F1/OCT1. Interacts with host SRCAP.

It is found in the host nucleus. In terms of biological role, plays a role in the elongation phase of viral strand displacement replication by unwinding the template in an ATP-independent fashion, employing its capacity to form multimers. Also enhances the rate of initiation. Released from template upon second strand synthesis. Assembles in complex with viral pTP, viral pol, host NFIA and host POU2F1/OCT1 on viral origin of replication. Covers the whole ssDNA genome during synthesis. The complementary strand synthesis induces its relese from DNA template. May inhibit cellular transcription mediated by the interaction between host SRCAP and CBP. The chain is DNA-binding protein from Homo sapiens (Human).